The chain runs to 1042 residues: Elongation factor 3 (1042 aa).

HEAT repeat units lie at residues 9–46, 86–124, 167–204, 206–242, 243–280, and 289–327; these read KVLM…DPDT, PYLV…TMNP, YRLP…LISN, DIDK…EVHA, STLS…LVED, and PKLI…VKEG. ABC transporter domains lie at 425-642 and 668-994; these read EEGE…YQDI and CRMR…EQEE. Residues Asn-704, Glu-923, Asn-926, and His-952 each contribute to the ADP site. A disordered region spans residues 1009-1042; it reads KKAKKLTSSELRKKKKERMARRKKGEEVFSDEDD. Over residues 1020 to 1031 the composition is skewed to basic residues; it reads RKKKKERMARRK.

Belongs to the ABC transporter superfamily. ABCF family. EF3 subfamily. In terms of assembly, monomer.

The protein resides in the cytoplasm. It carries out the reaction ATP + H2O = ADP + phosphate + H(+). The protein operates within protein biosynthesis; polypeptide chain elongation. Its function is as follows. Ribosome-dependent ATPase that functions in cytoplasmic translation elongation. Required for the ATP-dependent release of deacylated tRNA from the ribosomal E-site during protein biosynthesis. Stimulates the eEF1A-dependent binding of aminoacyl-tRNA to the ribosomal A-site, which has reduced affinity for tRNA as long as the E-site is occupied. Assists translation termination by stimulating the release of nascent protein from the ribosome by release factors. This Pneumocystis carinii protein is Elongation factor 3 (TEF3).